The primary structure comprises 434 residues: 3-phosphoshikimate 1-carboxyvinyltransferase (434 aa).

K22, S23, and R27 together coordinate 3-phosphoshikimate. Residue K22 participates in phosphoenolpyruvate binding. Phosphoenolpyruvate is bound by residues G94 and R122. Residues S169, S170, Q171, S199, D320, and K347 each contribute to the 3-phosphoshikimate site. Q171 contributes to the phosphoenolpyruvate binding site. The active-site Proton acceptor is D320. Phosphoenolpyruvate contacts are provided by R351, R395, and K420.

Belongs to the EPSP synthase family. Monomer.

The protein localises to the cytoplasm. The catalysed reaction is 3-phosphoshikimate + phosphoenolpyruvate = 5-O-(1-carboxyvinyl)-3-phosphoshikimate + phosphate. It participates in metabolic intermediate biosynthesis; chorismate biosynthesis; chorismate from D-erythrose 4-phosphate and phosphoenolpyruvate: step 6/7. Functionally, catalyzes the transfer of the enolpyruvyl moiety of phosphoenolpyruvate (PEP) to the 5-hydroxyl of shikimate-3-phosphate (S3P) to produce enolpyruvyl shikimate-3-phosphate and inorganic phosphate. The protein is 3-phosphoshikimate 1-carboxyvinyltransferase of Ralstonia pickettii (strain 12J).